We begin with the raw amino-acid sequence, 362 residues long: UDP-3-O-acylglucosamine N-acyltransferase 1 (362 aa).

The Proton acceptor role is filled by H258.

The protein belongs to the transferase hexapeptide repeat family. LpxD subfamily. Homotrimer.

The enzyme catalyses a UDP-3-O-[(3R)-3-hydroxyacyl]-alpha-D-glucosamine + a (3R)-hydroxyacyl-[ACP] = a UDP-2-N,3-O-bis[(3R)-3-hydroxyacyl]-alpha-D-glucosamine + holo-[ACP] + H(+). It participates in bacterial outer membrane biogenesis; LPS lipid A biosynthesis. Catalyzes the N-acylation of UDP-3-O-acylglucosamine using 3-hydroxyacyl-ACP as the acyl donor. Is involved in the biosynthesis of lipid A, a phosphorylated glycolipid that anchors the lipopolysaccharide to the outer membrane of the cell. In Nitrobacter winogradskyi (strain ATCC 25391 / DSM 10237 / CIP 104748 / NCIMB 11846 / Nb-255), this protein is UDP-3-O-acylglucosamine N-acyltransferase 1.